We begin with the raw amino-acid sequence, 32 residues long: ISGTSMSCPHVAGRAYVLDTSLRVYLLDTGLR.

Residues 1–32 form the Peptidase S8 domain; sequence ISGTSMSCPHVAGRAYVLDTSLRVYLLDTGLR. The active-site Charge relay system is Ser-5.

Belongs to the peptidase S8 family.

Inhibited by PMSF. Not inhibited by benzamidine, aprotinin, SBTI, EDTA, EGTA, 2-mercaptoethanol, iodoacetic acid or pepstatin A. Its function is as follows. Serine protease. Has fibrinolytic and fibrinogenolytic but no plasminogenolytic activity. Cleaves after Arg and Lys residues. Cleaves fibrinogen alpha chain, beta chain and gamma chain in that order. This chain is Fibrinolytic enzyme 2, found in Hediste japonica (Polychaete worm).